Here is a 916-residue protein sequence, read N- to C-terminus: MDYKDTLLLPTTDFAMRGNLPECEPARYAKWDEQKVYEKMKAKREKSAISFNIHDGPPYANGHLHIGHALNKILKDIILKTHYFFGQGIRYTPGWDCHGLPIEQQVEVKLGDKKKSMSKSDIRQECRNWAKEFITVQKDEFKSLGVIGDWNDPYLTMKFKFEANIYRTLCEVAKKGLLVERSKPVFWSWAARSALAEAEVEYEDKEDYSLYVAFCLSDAACKKLGVSDAKAVIWTTTPWTLVANQAISLNPNEKYALTSEGYIIALPLKETLINQGIINGKILKEFASSELEGLSAINPLNGRDSRFILGEHVLMDGGTGLVHTAPGHGEDDYFASLKYGIEVIMPVDEAGLYDETLRVKKLLPEHLLNEFIGLHIFKANEKLIELLGDAAVKVSKFVHSYPFCWRTHKPVIYRATKQWFIAMDEPKLSGKTLRQTALEALKSVKFYPEVGVKRISSMIENRPDWCISRQRDWGVPIAFFRDSATKEPIFDSRVLEHVAKVFDEKGSDAWWNLEISELLPKGTNLDPSKLEKVTDILDVWFDSGSTWNAVLNSGDYDAGGYQADMYLEGSDQHRGWFQSSLLLSCAINQKAPYKSVLTHGFTVDGNGNKMSKSKGNVIAPSDVAKRYGVEILRLWVGLSDYSSDLKISDDILKQVAEQYRKIRNTIRFLLANINDLDDISSHFGTLDKWILARATKSFKEVSECFKNYEYSKGFNILLNFLSTDLSGIYLDICKDRLYCDEKDGLRRRSSQSAMAIIAKSLLSLIAPTLTYTVDEAIEFAPDIIKNGAKDAFDLVYEPLVFEFKIDDELLTSSREKFNEIIDVLKKDKIIKSTLEVILETSSNEILANDLDEIIDWYMVSFVRNIESDEFLAEFAVGNDKFKIVKADRYKCPRCWKYAAKIDNDLCPRCAKVLKRV.

Positions 58 to 68 match the 'HIGH' region motif; the sequence is PYANGHLHIGH. Glutamate 568 provides a ligand contact to L-isoleucyl-5'-AMP. The 'KMSKS' region motif lies at 609 to 613; that stretch reads KMSKS. Residue lysine 612 coordinates ATP. Residues cysteine 891, cysteine 894, cysteine 906, and cysteine 909 each contribute to the Zn(2+) site.

It belongs to the class-I aminoacyl-tRNA synthetase family. IleS type 1 subfamily. Monomer. It depends on Zn(2+) as a cofactor.

Its subcellular location is the cytoplasm. It carries out the reaction tRNA(Ile) + L-isoleucine + ATP = L-isoleucyl-tRNA(Ile) + AMP + diphosphate. Its function is as follows. Catalyzes the attachment of isoleucine to tRNA(Ile). As IleRS can inadvertently accommodate and process structurally similar amino acids such as valine, to avoid such errors it has two additional distinct tRNA(Ile)-dependent editing activities. One activity is designated as 'pretransfer' editing and involves the hydrolysis of activated Val-AMP. The other activity is designated 'posttransfer' editing and involves deacylation of mischarged Val-tRNA(Ile). This is Isoleucine--tRNA ligase from Campylobacter fetus subsp. fetus (strain 82-40).